A 564-amino-acid chain; its full sequence is Putative zinc metalloproteinase in scaA 5'region (564 aa).

The Peptidase M13 domain occupies 1–564; sequence MTRLQDDFYD…KEADFSAEEF (564 aa). His478 serves as a coordination point for Zn(2+). Residue Glu479 is part of the active site. Zn(2+)-binding residues include His482 and Glu538. The active-site Proton donor is the Asp542.

This sequence belongs to the peptidase M13 family. It depends on Zn(2+) as a cofactor.

The chain is Putative zinc metalloproteinase in scaA 5'region from Streptococcus gordonii (strain Challis / ATCC 35105 / BCRC 15272 / CH1 / DL1 / V288).